The following is a 471-amino-acid chain: UDP-N-acetylmuramate--L-alanine ligase (471 aa).

Position 114–120 (Gly114–Thr120) interacts with ATP.

The protein belongs to the MurCDEF family.

The protein resides in the cytoplasm. The catalysed reaction is UDP-N-acetyl-alpha-D-muramate + L-alanine + ATP = UDP-N-acetyl-alpha-D-muramoyl-L-alanine + ADP + phosphate + H(+). It participates in cell wall biogenesis; peptidoglycan biosynthesis. In terms of biological role, cell wall formation. This Sinorhizobium medicae (strain WSM419) (Ensifer medicae) protein is UDP-N-acetylmuramate--L-alanine ligase.